The chain runs to 848 residues: Transforming growth factor beta receptor type 3 (848 aa).

A signal peptide spans 1-20; sequence MTLHCVVALFALISSCLATA. At 21–784 the chain is on the extracellular side; that stretch reads GPEPGVQCAL…IFHGLDTLTV (764 aa). Residues Asn-34 and Asn-141 are each glycosylated (N-linked (GlcNAc...) asparagine). A disulfide bridge links Cys-52 with Cys-197. Positions 390 to 448 are disordered; that stretch reads SGEGAARHGGLPFPFPYIPRRGRQDGGKDRLPRPKDPVVPSIQLLPGPREPQEAQGSRD. A compositionally biased stretch (basic and acidic residues) spans 411-425; it reads GRQDGGKDRLPRPKD. In terms of domain architecture, ZP spans 454–729; the sequence is RCDSEKMLVA…PKCVLPDEAC (276 aa). Asn-491 is a glycosylation site (N-linked (GlcNAc...) asparagine). O-linked (Xyl...) (glycosaminoglycan) serine glycosylation is found at Ser-529, Ser-533, and Ser-544. Asn-570, Asn-589, and Asn-696 each carry an N-linked (GlcNAc...) asparagine glycan. Cystine bridges form between Cys-638–Cys-704, Cys-659–Cys-729, and Cys-709–Cys-722. Positions 736–750 are interaction with TGF-beta ligand; that stretch reads MIWAMMQNKKTFTKP. A helical membrane pass occupies residues 785–806; it reads MGIAFAAFVIGALLTGALWYIY. At 807-848 the chain is on the cytoplasmic side; that stretch reads SHTGDSAGRQPVPTSPPASENSSAAHSLGSTQSTPCSSSSAA. Residues 813-848 form a disordered region; sequence AGRQPVPTSPPASENSSAAHSLGSTQSTPCSSSSAA. Low complexity predominate over residues 833-848; the sequence is SLGSTQSTPCSSSSAA. Thr-837 is modified (phosphothreonine).

In terms of assembly, forms homodimers and homooligomers. Interacts with DYNLT4. Interacts with integrin ITGA5:ITGB1; this interaction promotes the internalization and trafficking of ITGA5:ITGB1 into endocytic vesicles. Interacts with TGFB1, BMP2, BMP5, BMP7 or GDF5 and inhibin A via the ligand binding domains. Interacts with ALK3/BMPR1A; this interaction results in the cell surface retention of BMPR1A. Interacts with ALK6/BMPR1B; this interaction enhances BMPR1B-mediated stimulation of the BMP signaling pathway. Interacts with the scaffolding protein beta-arrestin2/ARRB2; this interaction mediates internalization of TGFBR3 and thus regulates migration, actin cytoskeleton and activation of CDC42. Post-translationally, extensively modified by glycosaminoglycan groups (GAG). Phosphorylated in the cytoplasmic domain by the type II receptor TGFBR2 at THR-837 to mediate recruitment of ARRB2 and subsequent internalization of TGFBR2 and TGFBR3.

The protein localises to the cell membrane. It localises to the secreted. It is found in the extracellular space. Its subcellular location is the extracellular matrix. Functionally, cell surface receptor that regulates diverse cellular processes including cell proliferation, differentiation, migration, and apoptosis. Initiates BMP, inhibin, and TGF-beta signaling pathways by interacting with different ligands including TGFB1, BMP2, BMP5, BMP7 or GDF5. Alternatively, acts as a cell surface coreceptor for BMP ligands, serving to enhance ligand binding by differentially regulating BMPR1A/ALK3 and BMPR1B/ALK6 receptor trafficking. Promotes epithelial cell adhesion, focal adhesion formation and integrin signaling during epithelial cell spreading on fibronectin. By interacting with the scaffolding protein beta-arrestin2/ARRB2, regulates migration or actin cytoskeleton and promotes the activation of CDC42 as well as the inhibition of NF-kappa-B. In gonadotrope cells, acts as an inhibin A coreceptor and regulates follicle-stimulating hormone (FSH) levels and female fertility. Plays a role in the inhibition of directed and random cell migration in epithelial cells by altering the actin cytoskeletal organization. Participates in epithelial-mesenchymal transformation (EMT) upon binding to BMP2 or TGFB2, by activating the PAR6/SMURF1/RHOA pathway. The sequence is that of Transforming growth factor beta receptor type 3 (TGFBR3) from Sus scrofa (Pig).